Reading from the N-terminus, the 227-residue chain is Ashwin (227 aa).

A compositionally biased stretch (basic and acidic residues) spans 71–84 (LPRSRWGKRMEKSR). The interval 71-227 (LPRSRWGKRM…KKKIQHITWP (157 aa)) is disordered. Positions 88-98 (SSSSTHSSSTD) are enriched in low complexity. Polar residues predominate over residues 153-173 (GASTNCSSSNFSNRTPVSSSG). Low complexity predominate over residues 178-191 (SPSNHSNSSVHSNN). Over residues 204–219 (GEPDTAKDIKSPETKK) the composition is skewed to basic and acidic residues.

The protein belongs to the ashwin family.

It is found in the nucleus. The polypeptide is Ashwin (Danio rerio (Zebrafish)).